A 1075-amino-acid chain; its full sequence is DNA-directed RNA polymerase subunit beta (1075 aa).

Belongs to the RNA polymerase beta chain family. In plastids the minimal PEP RNA polymerase catalytic core is composed of four subunits: alpha, beta, beta', and beta''. When a (nuclear-encoded) sigma factor is associated with the core the holoenzyme is formed, which can initiate transcription.

Its subcellular location is the plastid. It is found in the chloroplast. The enzyme catalyses RNA(n) + a ribonucleoside 5'-triphosphate = RNA(n+1) + diphosphate. In terms of biological role, DNA-dependent RNA polymerase catalyzes the transcription of DNA into RNA using the four ribonucleoside triphosphates as substrates. The chain is DNA-directed RNA polymerase subunit beta from Sorghum bicolor (Sorghum).